The sequence spans 549 residues: Glucose-6-phosphate isomerase (549 aa).

The Proton donor role is filled by E355. Residues H386 and K514 contribute to the active site.

Belongs to the GPI family.

It is found in the cytoplasm. The enzyme catalyses alpha-D-glucose 6-phosphate = beta-D-fructose 6-phosphate. Its pathway is carbohydrate biosynthesis; gluconeogenesis. It participates in carbohydrate degradation; glycolysis; D-glyceraldehyde 3-phosphate and glycerone phosphate from D-glucose: step 2/4. Its function is as follows. Catalyzes the reversible isomerization of glucose-6-phosphate to fructose-6-phosphate. In Pectobacterium carotovorum subsp. carotovorum (strain PC1), this protein is Glucose-6-phosphate isomerase.